Here is a 125-residue protein sequence, read N- to C-terminus: MPTISQLVRKGRKTIASASDSPALKECPQKRGVCTVVKTTTPKKPNSALRKVARIRLTNGYEVTAYIPGVGHNLQEHSVVLIRGGRVKDLPGVRYHIVRGALDAAGVANRMQSRSKYGAKKPKQK.

Asp-89 bears the 3-methylthioaspartic acid mark.

The protein belongs to the universal ribosomal protein uS12 family. Part of the 30S ribosomal subunit. Contacts proteins S8 and S17. May interact with IF1 in the 30S initiation complex.

With S4 and S5 plays an important role in translational accuracy. Its function is as follows. Interacts with and stabilizes bases of the 16S rRNA that are involved in tRNA selection in the A site and with the mRNA backbone. Located at the interface of the 30S and 50S subunits, it traverses the body of the 30S subunit contacting proteins on the other side and probably holding the rRNA structure together. The combined cluster of proteins S8, S12 and S17 appears to hold together the shoulder and platform of the 30S subunit. The protein is Small ribosomal subunit protein uS12 of Clostridium botulinum (strain ATCC 19397 / Type A).